We begin with the raw amino-acid sequence, 216 residues long: FMN-dependent NADH:quinone oxidoreductase 2 (216 aa).

Residues Ser9, 15-17 (SVS), 96-99 (MYNF), and 140-143 (SRGG) each bind FMN.

It belongs to the azoreductase type 1 family. As to quaternary structure, homodimer. It depends on FMN as a cofactor.

It catalyses the reaction 2 a quinone + NADH + H(+) = 2 a 1,4-benzosemiquinone + NAD(+). The catalysed reaction is N,N-dimethyl-1,4-phenylenediamine + anthranilate + 2 NAD(+) = 2-(4-dimethylaminophenyl)diazenylbenzoate + 2 NADH + 2 H(+). Quinone reductase that provides resistance to thiol-specific stress caused by electrophilic quinones. Functionally, also exhibits azoreductase activity. Catalyzes the reductive cleavage of the azo bond in aromatic azo compounds to the corresponding amines. In Xanthomonas axonopodis pv. citri (strain 306), this protein is FMN-dependent NADH:quinone oxidoreductase 2.